Here is a 232-residue protein sequence, read N- to C-terminus: 2-C-methyl-D-erythritol 4-phosphate cytidylyltransferase (232 aa).

Belongs to the IspD/TarI cytidylyltransferase family. IspD subfamily.

The catalysed reaction is 2-C-methyl-D-erythritol 4-phosphate + CTP + H(+) = 4-CDP-2-C-methyl-D-erythritol + diphosphate. It functions in the pathway isoprenoid biosynthesis; isopentenyl diphosphate biosynthesis via DXP pathway; isopentenyl diphosphate from 1-deoxy-D-xylulose 5-phosphate: step 2/6. Functionally, catalyzes the formation of 4-diphosphocytidyl-2-C-methyl-D-erythritol from CTP and 2-C-methyl-D-erythritol 4-phosphate (MEP). The sequence is that of 2-C-methyl-D-erythritol 4-phosphate cytidylyltransferase from Shewanella frigidimarina (strain NCIMB 400).